A 124-amino-acid polypeptide reads, in one-letter code: S-adenosylmethionine decarboxylase proenzyme (124 aa).

The active-site Schiff-base intermediate with substrate; via pyruvic acid is the Ser63. At Ser63 the chain carries Pyruvic acid (Ser); by autocatalysis. His68 functions as the Proton acceptor; for processing activity in the catalytic mechanism. Cys83 acts as the Proton donor; for catalytic activity in catalysis.

The protein belongs to the prokaryotic AdoMetDC family. Type 1 subfamily. In terms of assembly, heterotetramer of two alpha and two beta chains arranged as a dimer of alpha/beta heterodimers. Pyruvate is required as a cofactor. Is synthesized initially as an inactive proenzyme. Formation of the active enzyme involves a self-maturation process in which the active site pyruvoyl group is generated from an internal serine residue via an autocatalytic post-translational modification. Two non-identical subunits are generated from the proenzyme in this reaction, and the pyruvate is formed at the N-terminus of the alpha chain, which is derived from the carboxyl end of the proenzyme. The post-translation cleavage follows an unusual pathway, termed non-hydrolytic serinolysis, in which the side chain hydroxyl group of the serine supplies its oxygen atom to form the C-terminus of the beta chain, while the remainder of the serine residue undergoes an oxidative deamination to produce ammonia and the pyruvoyl group blocking the N-terminus of the alpha chain.

The catalysed reaction is S-adenosyl-L-methionine + H(+) = S-adenosyl 3-(methylsulfanyl)propylamine + CO2. The protein operates within amine and polyamine biosynthesis; S-adenosylmethioninamine biosynthesis; S-adenosylmethioninamine from S-adenosyl-L-methionine: step 1/1. Catalyzes the decarboxylation of S-adenosylmethionine to S-adenosylmethioninamine (dcAdoMet), the propylamine donor required for the synthesis of the polyamines spermine and spermidine from the diamine putrescine. This chain is S-adenosylmethionine decarboxylase proenzyme, found in Caldicellulosiruptor bescii (strain ATCC BAA-1888 / DSM 6725 / KCTC 15123 / Z-1320) (Anaerocellum thermophilum).